A 487-amino-acid chain; its full sequence is Malonate-semialdehyde dehydrogenase 2 (487 aa).

5 residues coordinate NAD(+): Phe-154, Lys-178, Glu-181, Arg-182, and Ser-231. Cys-286 functions as the Nucleophile in the catalytic mechanism. Glu-386 contacts NAD(+).

It belongs to the aldehyde dehydrogenase family. IolA subfamily. Homotetramer.

It carries out the reaction 3-oxopropanoate + NAD(+) + CoA + H2O = hydrogencarbonate + acetyl-CoA + NADH + H(+). It catalyses the reaction 2-methyl-3-oxopropanoate + NAD(+) + CoA + H2O = propanoyl-CoA + hydrogencarbonate + NADH + H(+). Its pathway is polyol metabolism; myo-inositol degradation into acetyl-CoA; acetyl-CoA from myo-inositol: step 7/7. Catalyzes the oxidation of malonate semialdehyde (MSA) and methylmalonate semialdehyde (MMSA) into acetyl-CoA and propanoyl-CoA, respectively. Is involved in a myo-inositol catabolic pathway. Bicarbonate, and not CO2, is the end-product of the enzymatic reaction. In Bacillus thuringiensis subsp. konkukian (strain 97-27), this protein is Malonate-semialdehyde dehydrogenase 2.